Here is a 263-residue protein sequence, read N- to C-terminus: Tropinone reductase homolog At2g29300 (263 aa).

13 to 37 lines the NADP(+) pocket; it reads LVTGAASGIGYAIVEELAGFGARIH. Residue serine 146 coordinates substrate. The active-site Proton acceptor is tyrosine 160.

The protein belongs to the short-chain dehydrogenases/reductases (SDR) family. SDR65C subfamily.

The protein is Tropinone reductase homolog At2g29300 of Arabidopsis thaliana (Mouse-ear cress).